The chain runs to 142 residues: Hemoglobin subunit alpha (142 aa).

The Globin domain maps to V2–R142. Residue S4 is modified to Phosphoserine. K8 and K12 each carry N6-succinyllysine. Position 17 is an N6-acetyllysine; alternate (K17). K17 is modified (N6-succinyllysine; alternate). Residue Y25 is modified to Phosphotyrosine. Position 36 is a phosphoserine (S36). N6-succinyllysine is present on K41. S50 is modified (phosphoserine). H59 is a binding site for O2. H88 is a binding site for heme b. At S103 the chain carries Phosphoserine. Position 109 is a phosphothreonine (T109). S125 is subject to Phosphoserine. 2 positions are modified to phosphothreonine: T135 and T138. Residue S139 is modified to Phosphoserine.

This sequence belongs to the globin family. In terms of assembly, heterotetramer of two alpha chains and two beta chains. As to expression, red blood cells.

Its function is as follows. Involved in oxygen transport from the lung to the various peripheral tissues. Functionally, hemopressin acts as an antagonist peptide of the cannabinoid receptor CNR1. Hemopressin-binding efficiently blocks cannabinoid receptor CNR1 and subsequent signaling. The chain is Hemoglobin subunit alpha (HBA) from Bos gaurus frontalis (Domestic gayal).